Here is a 5538-residue protein sequence, read N- to C-terminus: Leashin (5538 aa).

Residues 1–10 are compositionally biased toward gly residues; that stretch reads MFRALMGGGR. 22 disordered regions span residues 1 to 270, 286 to 315, 331 to 365, 510 to 555, 596 to 712, 800 to 901, 913 to 944, 1027 to 1145, 1164 to 1297, 1310 to 1398, 1432 to 1993, 2067 to 2146, 2165 to 2207, 2233 to 3065, 3077 to 3894, 3910 to 4034, 4072 to 4128, 4238 to 4421, 4442 to 4463, 4509 to 4698, 4733 to 4850, and 4910 to 5052; these read MFRA…SSMG, EVDP…TFGI, LPLP…PHTH, SRDA…KKSS, TESV…DISQ, AATS…FPTG, ALAS…PVPT, NRPH…KDSF, VLSG…GYRD, PTPP…RYVS, EDPT…TSVE, SELL…VNAF, NRLS…SPPA, PEAA…SQPI, MAEE…EIVS, EEKA…DTGL, KFKQ…EEPL, EAAL…SNQA, PRPL…DEND, LRRQ…TSNT, KTDG…VEQA, and ALTV…RHRR. The woronin bodies-binding region stretch occupies residues 1–1100; sequence MFRALMGGGR…RASGVQLIDR (1100 aa). Residues 14 to 23 are compositionally biased toward low complexity; the sequence is SRSTTSSSKS. Basic and acidic residues-rich tracts occupy residues 42–51 and 89–167; these read SRGDDRDRGL and VEHD…ERSR. Over residues 299–313 the composition is skewed to polar residues; it reads AGTTSEPPKPSNTTF. The segment covering 334 to 352 has biased composition (pro residues); it reads PASPTSPPEPVPTTAPYAP. Basic residues predominate over residues 514 to 523; that stretch reads PRKHHYRQRR. The span at 598–607 shows a compositional bias: polar residues; it reads SVSTARRSQT. Residues 639-655 show a composition bias toward basic residues; the sequence is HRSRSRSHSSSRNRRHS. Positions 660–674 are enriched in low complexity; the sequence is AAVGAAVGSGAIALA. The segment covering 682–698 has biased composition (basic residues); sequence SRSRSRSRFPRKSKGRK. Over residues 809–825 the composition is skewed to basic and acidic residues; sequence RAGEILVAKETRSRHSD. 2 stretches are compositionally biased toward low complexity: residues 842–851 and 862–880; these read GDQSSSSVSS and GSDE…GWRW. Over residues 881–891 the composition is skewed to basic residues; that stretch reads GSKKNKKKKRA. 8 stretches are compositionally biased toward basic and acidic residues: residues 1068–1091, 1098–1145, 1178–1198, 1207–1226, 1356–1365, 1375–1387, 1447–1462, and 1478–1488; these read LTKE…DAER, IDRD…KDSF, SQRR…RGSE, SKSE…RQPE, WGEHKTHEYE, SVDH…REQP, GRVE…ESKS, and EEKAPSSRVIE. Over residues 1506–1516 the composition is skewed to low complexity; it reads QESSEPQTRTS. Basic and acidic residues-rich tracts occupy residues 1521 to 1536, 1549 to 1559, and 1572 to 1594; these read VIDR…DGSR, GKERDESELRA, and EELR…DRRS. A compositionally biased stretch (basic residues) spans 1639 to 1648; sequence KKKRRKRRSK. 3 stretches are compositionally biased toward basic and acidic residues: residues 1672–1686, 1700–1773, and 1788–1800; these read EKLK…EKKA, EPVD…QRRE, and KSGE…KLSE. Low complexity-rich tracts occupy residues 1867–1876 and 1889–1898; these read PAPRSRSRPA and SQSSRRSSIL. Basic and acidic residues predominate over residues 1950-1975; it reads KNSREMRPLWLVERHGPGHGEHKLEE. Polar residues-rich tracts occupy residues 1984–1993 and 2121–2130; these read KTSSANTSVE and TPQNNVTAAS. Basic and acidic residues-rich tracts occupy residues 2187–2196, 2269–2279, and 2307–2320; these read DADRTHKPIA, VPRDDKRRDSV, and GENK…KNEN. Residues 2321–2331 show a composition bias toward polar residues; sequence ANDNSQAQTEQ. Over residues 2344–2355 the composition is skewed to basic residues; sequence AKKKKKKNKKKR. Residues 2358–2370 are compositionally biased toward polar residues; that stretch reads MDSNTQEPTTPVD. Residues 2427–2441 show a composition bias toward basic and acidic residues; the sequence is DVEKAIEAPDVRKEL. Over residues 2449–2461 the composition is skewed to low complexity; that stretch reads APEDTPAEPTAET. A compositionally biased stretch (basic residues) spans 2473-2484; that stretch reads KKSKKKKKKKNK. Residues 2494–2525 are compositionally biased toward polar residues; that stretch reads DPASTETPEASAANSQVVAAEQVESTLETTQP. 3 stretches are compositionally biased toward basic and acidic residues: residues 2580–2590, 2647–2661, and 2677–2691; these read NQAKELPHPEE, PEDK…DLKS, and ALDK…RPAE. A compositionally biased stretch (low complexity) spans 2719–2734; sequence EEPTPTAAELETPLSR. Basic residues predominate over residues 2735–2747; sequence KNSKKNKKKNKRK. Over residues 2796–2812 the composition is skewed to basic and acidic residues; the sequence is DENKGESRDVQAVKEET. Residues 2874-2884 are compositionally biased toward basic residues; it reads KKKAKKKKNRK. Residues 2885–2894 show a composition bias toward polar residues; it reads TANVSESQPE. Composition is skewed to basic residues over residues 3003-3013 and 3089-3100; these read KKSKKNKKKKQ and KKTKKEKKKKRQ. Residues 3145–3172 are compositionally biased toward basic and acidic residues; that stretch reads AIEHAEAAAEHSQEQPNKDVTLHADHSP. The segment covering 3248–3268 has biased composition (low complexity); that stretch reads PAMEGGAAAEELVAVEPDVLE. The span at 3293-3303 shows a compositional bias: polar residues; that stretch reads ELVNAETTQKT. Over residues 3329–3341 the composition is skewed to basic residues; that stretch reads SKKKDKKKKKKRQ. Positions 3347–3367 are enriched in basic and acidic residues; it reads DEQRSSTKEEPTAEFSSDHVP. 2 stretches are compositionally biased toward low complexity: residues 3397 to 3409 and 3422 to 3435; these read TQTA…SSAS and ESTQ…AQTA. Residues 3436 to 3450 show a composition bias toward basic residues; the sequence is KSKKKAKKDKKKRKS. Basic and acidic residues predominate over residues 3480 to 3495; sequence EGPKPGDKPTSPKDSS. Positions 3547-3564 are enriched in low complexity; it reads EEQAVVEETVAPPVVDEA. Polar residues-rich tracts occupy residues 3565-3580 and 3604-3613; these read SQLQ…LWSE and VSPSLENNEG. 2 stretches are compositionally biased toward basic residues: residues 3642-3652 and 3716-3730; these read KSKKNKKKKKR and KAKK…KRQS. A compositionally biased stretch (polar residues) spans 3768–3787; that stretch reads TFSQETSETISTEAKSSEPS. Residues 3800–3819 show a composition bias toward basic and acidic residues; sequence KENQSHDTEPHGGNDKDLTW. Polar residues predominate over residues 3823 to 3837; it reads MVSSQVEQQQGTPSD. The span at 3876–3893 shows a compositional bias: basic and acidic residues; sequence DRLERSGEEGTRVKKEIV. Composition is skewed to polar residues over residues 3915-3925 and 3965-3980; these read ISSQGEDTIQV and KDQF…SQSK. Over residues 4010-4020 the composition is skewed to acidic residues; that stretch reads TSQDDSVDAVQ. A compositionally biased stretch (basic and acidic residues) spans 4111–4123; the sequence is ESRENKFKEKQLA. The span at 4244–4255 shows a compositional bias: basic residues; sequence KNSKKKSKKAKK. The span at 4328–4345 shows a compositional bias: polar residues; that stretch reads LGQTPNMDNQTDDVQSTE. Basic residues predominate over residues 4378–4391; it reads KLSKKDRRKAKKKS. Positions 4392 to 4406 are enriched in basic and acidic residues; the sequence is AKDAIEPSDEPELRN. The septal pore-binding region stretch occupies residues 4495–5538; the sequence is AIAEFDETAI…SSTMDISNVI (1044 aa). Over residues 4554–4570 the composition is skewed to polar residues; that stretch reads TEQSAGLQAKSVSSQGA. Basic and acidic residues-rich tracts occupy residues 4574–4591 and 4660–4673; these read IQDD…DQTK and EESH…EKGP. Over residues 4940-4954 the composition is skewed to low complexity; that stretch reads SSVSSVKSVQSTHSV. Residues 4966 to 4988 are compositionally biased toward polar residues; it reads RNTSGDLRAASQAQESHGTQPHA. Residues 4989–4998 show a composition bias toward pro residues; that stretch reads TPQPPQPPPS. Residues 5050–5223 are a coiled coil; sequence HRRSMQHLQE…QQQIAASLHD (174 aa).

In terms of assembly, binds directly or indirectly to the Woronin body major protein hexA.

It localises to the cell septum. In terms of biological role, acts as the tether and is essential for anchoring of Woronin bodies at the septal pore. In damaged hyphae, Woronin bodies occlude septal pores in order to separate intact from damaged compartments. The polypeptide is Leashin (Aspergillus fumigatus (strain ATCC MYA-4609 / CBS 101355 / FGSC A1100 / Af293) (Neosartorya fumigata)).